Consider the following 165-residue polypeptide: Nucleotide-binding protein Pro_0479 (165 aa).

Belongs to the YajQ family.

In terms of biological role, nucleotide-binding protein. This is Nucleotide-binding protein Pro_0479 from Prochlorococcus marinus (strain SARG / CCMP1375 / SS120).